The following is a 284-amino-acid chain: Acetyl-coenzyme A carboxylase carboxyl transferase subunit beta (284 aa).

A CoA carboxyltransferase N-terminal domain is found at 25 to 284 (LWTKCPKCES…ICRMLLQKSA (260 aa)). Positions 29, 32, 48, and 51 each coordinate Zn(2+). A C4-type zinc finger spans residues 29 to 51 (CPKCESTLYRAEVRRNLEVCPKC).

The protein belongs to the AccD/PCCB family. In terms of assembly, acetyl-CoA carboxylase is a heterohexamer composed of biotin carboxyl carrier protein (AccB), biotin carboxylase (AccC) and two subunits each of ACCase subunit alpha (AccA) and ACCase subunit beta (AccD). The cofactor is Zn(2+).

The protein localises to the cytoplasm. It carries out the reaction N(6)-carboxybiotinyl-L-lysyl-[protein] + acetyl-CoA = N(6)-biotinyl-L-lysyl-[protein] + malonyl-CoA. The protein operates within lipid metabolism; malonyl-CoA biosynthesis; malonyl-CoA from acetyl-CoA: step 1/1. In terms of biological role, component of the acetyl coenzyme A carboxylase (ACC) complex. Biotin carboxylase (BC) catalyzes the carboxylation of biotin on its carrier protein (BCCP) and then the CO(2) group is transferred by the transcarboxylase to acetyl-CoA to form malonyl-CoA. The sequence is that of Acetyl-coenzyme A carboxylase carboxyl transferase subunit beta from Hydrogenovibrio crunogenus (strain DSM 25203 / XCL-2) (Thiomicrospira crunogena).